A 241-amino-acid polypeptide reads, in one-letter code: ATP phosphoribosyltransferase (241 aa).

This sequence belongs to the ATP phosphoribosyltransferase family. Short subfamily. Heteromultimer composed of HisG and HisZ subunits.

It localises to the cytoplasm. The enzyme catalyses 1-(5-phospho-beta-D-ribosyl)-ATP + diphosphate = 5-phospho-alpha-D-ribose 1-diphosphate + ATP. The protein operates within amino-acid biosynthesis; L-histidine biosynthesis; L-histidine from 5-phospho-alpha-D-ribose 1-diphosphate: step 1/9. Its function is as follows. Catalyzes the condensation of ATP and 5-phosphoribose 1-diphosphate to form N'-(5'-phosphoribosyl)-ATP (PR-ATP). Has a crucial role in the pathway because the rate of histidine biosynthesis seems to be controlled primarily by regulation of HisG enzymatic activity. The sequence is that of ATP phosphoribosyltransferase from Gluconobacter oxydans (strain 621H) (Gluconobacter suboxydans).